Consider the following 168-residue polypeptide: ATP synthase subunit b (168 aa).

A helical transmembrane segment spans residues S9–L29.

The protein belongs to the ATPase B chain family. F-type ATPases have 2 components, F(1) - the catalytic core - and F(0) - the membrane proton channel. F(1) has five subunits: alpha(3), beta(3), gamma(1), delta(1), epsilon(1). F(0) has three main subunits: a(1), b(2) and c(10-14). The alpha and beta chains form an alternating ring which encloses part of the gamma chain. F(1) is attached to F(0) by a central stalk formed by the gamma and epsilon chains, while a peripheral stalk is formed by the delta and b chains.

It is found in the cell membrane. In terms of biological role, f(1)F(0) ATP synthase produces ATP from ADP in the presence of a proton or sodium gradient. F-type ATPases consist of two structural domains, F(1) containing the extramembraneous catalytic core and F(0) containing the membrane proton channel, linked together by a central stalk and a peripheral stalk. During catalysis, ATP synthesis in the catalytic domain of F(1) is coupled via a rotary mechanism of the central stalk subunits to proton translocation. Functionally, component of the F(0) channel, it forms part of the peripheral stalk, linking F(1) to F(0). The sequence is that of ATP synthase subunit b from Bacillus mycoides (strain KBAB4) (Bacillus weihenstephanensis).